A 388-amino-acid chain; its full sequence is Succinate--CoA ligase [ADP-forming] subunit beta (388 aa).

The ATP-grasp domain occupies K9–K236. ATP is bound by residues K45, G52–G54, E91, S94, and E99. Residues N191 and D205 each coordinate Mg(2+). Substrate contacts are provided by residues N256 and G318–T320.

It belongs to the succinate/malate CoA ligase beta subunit family. In terms of assembly, heterotetramer of two alpha and two beta subunits. Requires Mg(2+) as cofactor.

It carries out the reaction succinate + ATP + CoA = succinyl-CoA + ADP + phosphate. The enzyme catalyses GTP + succinate + CoA = succinyl-CoA + GDP + phosphate. Its pathway is carbohydrate metabolism; tricarboxylic acid cycle; succinate from succinyl-CoA (ligase route): step 1/1. Functionally, succinyl-CoA synthetase functions in the citric acid cycle (TCA), coupling the hydrolysis of succinyl-CoA to the synthesis of either ATP or GTP and thus represents the only step of substrate-level phosphorylation in the TCA. The beta subunit provides nucleotide specificity of the enzyme and binds the substrate succinate, while the binding sites for coenzyme A and phosphate are found in the alpha subunit. The polypeptide is Succinate--CoA ligase [ADP-forming] subunit beta (Frankia casuarinae (strain DSM 45818 / CECT 9043 / HFP020203 / CcI3)).